We begin with the raw amino-acid sequence, 177 residues long: Putative peroxiredoxin (177 aa).

Positions 8-177 constitute a Thioredoxin domain; that stretch reads TAKGNEIPDT…ASIDTILTKV (170 aa). Cys64 functions as the Cysteine sulfenic acid (-SOH) intermediate in the catalytic mechanism. The Microbody targeting signal motif lies at 175–177; it reads TKV.

It belongs to the peroxiredoxin family. Prx5 subfamily. In terms of assembly, homodimer; disulfide-linked, upon oxidation.

It catalyses the reaction a hydroperoxide + [thioredoxin]-dithiol = an alcohol + [thioredoxin]-disulfide + H2O. Functionally, thiol-specific peroxidase that catalyzes the reduction of hydrogen peroxide and organic hydroperoxides to water and alcohols, respectively. Plays a role in cell protection against oxidative stress by detoxifying peroxides and as sensor of hydrogen peroxide-mediated signaling events. This is Putative peroxiredoxin from Malassezia furfur (Pityriasis versicolor infection agent).